The primary structure comprises 378 residues: Chaperone protein DnaJ (378 aa).

Residues 5 to 70 enclose the J domain; sequence DFYEVLGLSK…QKRAAYDQYG (66 aa). Residues 133-211 form a CR-type zinc finger; sequence GITKEIRIPT…CHGDGRVERY (79 aa). 8 residues coordinate Zn(2+): Cys146, Cys149, Cys163, Cys166, Cys185, Cys188, Cys199, and Cys202. CXXCXGXG motif repeat units lie at residues 146–153, 163–170, 185–192, and 199–206; these read CDKCHGSG, CSTCHGAG, CPTCHGRG, and CSKCHGDG.

The protein belongs to the DnaJ family. Homodimer. Requires Zn(2+) as cofactor.

It is found in the cytoplasm. Its function is as follows. Participates actively in the response to hyperosmotic and heat shock by preventing the aggregation of stress-denatured proteins and by disaggregating proteins, also in an autonomous, DnaK-independent fashion. Unfolded proteins bind initially to DnaJ; upon interaction with the DnaJ-bound protein, DnaK hydrolyzes its bound ATP, resulting in the formation of a stable complex. GrpE releases ADP from DnaK; ATP binding to DnaK triggers the release of the substrate protein, thus completing the reaction cycle. Several rounds of ATP-dependent interactions between DnaJ, DnaK and GrpE are required for fully efficient folding. Also involved, together with DnaK and GrpE, in the DNA replication of plasmids through activation of initiation proteins. The protein is Chaperone protein DnaJ of Proteus mirabilis (strain HI4320).